The primary structure comprises 490 residues: Serine hydroxymethyltransferase (490 aa).

Residues Leu-179 and 183 to 185 each bind (6S)-5,6,7,8-tetrahydrofolate; that span reads GHL. Lys-291 carries the post-translational modification N6-(pyridoxal phosphate)lysine. An Isoglutamyl lysine isopeptide (Lys-Gln) (interchain with Q-Cter in protein Pup) cross-link involves residue Lys-362.

Belongs to the SHMT family. In terms of assembly, homodimer. Pyridoxal 5'-phosphate serves as cofactor.

It localises to the cytoplasm. It carries out the reaction (6R)-5,10-methylene-5,6,7,8-tetrahydrofolate + glycine + H2O = (6S)-5,6,7,8-tetrahydrofolate + L-serine. The protein operates within one-carbon metabolism; tetrahydrofolate interconversion. It functions in the pathway amino-acid biosynthesis; glycine biosynthesis; glycine from L-serine: step 1/1. Its function is as follows. Catalyzes the reversible interconversion of serine and glycine with tetrahydrofolate (THF) serving as the one-carbon carrier. This reaction serves as the major source of one-carbon groups required for the biosynthesis of purines, thymidylate, methionine, and other important biomolecules. Also exhibits THF-independent aldolase activity toward beta-hydroxyamino acids, producing glycine and aldehydes, via a retro-aldol mechanism. This chain is Serine hydroxymethyltransferase, found in Mycolicibacterium smegmatis (strain ATCC 700084 / mc(2)155) (Mycobacterium smegmatis).